The primary structure comprises 122 residues: Small ribosomal subunit protein uS13 (122 aa).

The tract at residues 96–122 (LPVRGQRTKTNSRTRKGKRKTIAGKKK) is disordered. Basic residues predominate over residues 101–122 (QRTKTNSRTRKGKRKTIAGKKK).

Belongs to the universal ribosomal protein uS13 family. Part of the 30S ribosomal subunit. Forms a loose heterodimer with protein S19. Forms two bridges to the 50S subunit in the 70S ribosome.

Functionally, located at the top of the head of the 30S subunit, it contacts several helices of the 16S rRNA. In the 70S ribosome it contacts the 23S rRNA (bridge B1a) and protein L5 of the 50S subunit (bridge B1b), connecting the 2 subunits; these bridges are implicated in subunit movement. Contacts the tRNAs in the A and P-sites. The chain is Small ribosomal subunit protein uS13 from Chlamydia trachomatis serovar L2 (strain ATCC VR-902B / DSM 19102 / 434/Bu).